Consider the following 360-residue polypeptide: DNA replication and repair protein RecF (360 aa).

ATP is bound at residue 30–37; it reads GANGSGKT.

It belongs to the RecF family.

Its subcellular location is the cytoplasm. Functionally, the RecF protein is involved in DNA metabolism; it is required for DNA replication and normal SOS inducibility. RecF binds preferentially to single-stranded, linear DNA. It also seems to bind ATP. The chain is DNA replication and repair protein RecF from Acinetobacter baumannii (strain ATCC 17978 / DSM 105126 / CIP 53.77 / LMG 1025 / NCDC KC755 / 5377).